We begin with the raw amino-acid sequence, 482 residues long: ATP synthase subunit beta (482 aa).

161–168 contacts ATP; that stretch reads GGAGVGKT.

Belongs to the ATPase alpha/beta chains family. As to quaternary structure, F-type ATPases have 2 components, CF(1) - the catalytic core - and CF(0) - the membrane proton channel. CF(1) has five subunits: alpha(3), beta(3), gamma(1), delta(1), epsilon(1). CF(0) has four main subunits: a(1), b(1), b'(1) and c(9-12).

Its subcellular location is the cellular thylakoid membrane. The catalysed reaction is ATP + H2O + 4 H(+)(in) = ADP + phosphate + 5 H(+)(out). Functionally, produces ATP from ADP in the presence of a proton gradient across the membrane. The catalytic sites are hosted primarily by the beta subunits. The polypeptide is ATP synthase subunit beta (Gloeothece citriformis (strain PCC 7424) (Cyanothece sp. (strain PCC 7424))).